The following is a 147-amino-acid chain: Ribosome maturation factor RimP (147 aa).

This sequence belongs to the RimP family.

It localises to the cytoplasm. Functionally, required for maturation of 30S ribosomal subunits. This chain is Ribosome maturation factor RimP, found in Sulfurihydrogenibium sp. (strain YO3AOP1).